A 429-amino-acid chain; its full sequence is Fez family zinc finger protein 1 (429 aa).

An Engrailed homology 1 repressor motif is present at residues 29-44; the sequence is PLAFSIERIMARTPEP. 6 consecutive C2H2-type zinc fingers follow at residues 247 to 269, 275 to 297, 303 to 325, 331 to 353, 359 to 381, and 387 to 410; these read FTCEVCGKVFNAHYNLTRHMPVH, FVCKVCGKGFRQASTLCRHKIIH, HKCNQCGKAFNRSSTLNTHTRIH, FICEFCGKGFHQKGNYKNHKLTH, FKCNICNKAFHQVYNLTFHMHTH, and FTCPTCGKGFCRNFDLKKHIRKLH. Residues 409–429 form a disordered region; sequence LHDISPGPHSPPTPTGNTEGQ.

It belongs to the krueppel C2H2-type zinc-finger protein family.

The protein resides in the nucleus. Its function is as follows. Transcription repressor. Involved in the development of the forebrain region. This is Fez family zinc finger protein 1 (fezf1) from Danio rerio (Zebrafish).